The chain runs to 326 residues: ATP-dependent 6-phosphofructokinase (326 aa).

Gly12 is a binding site for ATP. Residue 22–26 (RAIIK) coordinates ADP. ATP is bound by residues 73 to 74 (RF) and 103 to 106 (GDGS). Asp104 contributes to the Mg(2+) binding site. 126 to 128 (TID) contacts substrate. Residue Asp128 is the Proton acceptor of the active site. Arg155 contacts ADP. Substrate is bound by residues Arg163 and 170-172 (MGH). ADP contacts are provided by residues 186 to 188 (GSE), Lys212, and 215 to 217 (KRS). Residues Glu224, Lys246, and 252 to 255 (HIQR) contribute to the substrate site.

This sequence belongs to the phosphofructokinase type A (PFKA) family. ATP-dependent PFK group I subfamily. Prokaryotic clade 'B1' sub-subfamily. In terms of assembly, homotetramer. Mg(2+) is required as a cofactor.

It localises to the cytoplasm. It catalyses the reaction beta-D-fructose 6-phosphate + ATP = beta-D-fructose 1,6-bisphosphate + ADP + H(+). Its pathway is carbohydrate degradation; glycolysis; D-glyceraldehyde 3-phosphate and glycerone phosphate from D-glucose: step 3/4. With respect to regulation, allosterically activated by ADP and other diphosphonucleosides, and allosterically inhibited by phosphoenolpyruvate. Its function is as follows. Catalyzes the phosphorylation of D-fructose 6-phosphate to fructose 1,6-bisphosphate by ATP, the first committing step of glycolysis. The chain is ATP-dependent 6-phosphofructokinase from Mycoplasmopsis pulmonis (strain UAB CTIP) (Mycoplasma pulmonis).